The chain runs to 303 residues: MLWFKNLLIYRLNREIPLVAQEMESQLSAMAFTPCGSQDMSRTGWVPPLGGGSDALTHCANGQILLCARKEEKILPAPVLKQALQAKIERLEGEQHRKLKKTEKDALKDEVLHSLLPRAFSRFNQTWLWIDSVNNLIMLDAASAKRAEDVLALLRKSLGSLPVVPLTLDKPIEMTLTEWVRSGNTPAGFCLQDEAELKAILEEGGVIRCKQQALVCDEIAVHIEAGKLVTKLALDWHERIQLVLADDGAIKRLKFSETLRDQNEDIDREDAALRFDADFALMTGELAVLIDELITALGGETAQ.

This sequence belongs to the RdgC family.

Its subcellular location is the cytoplasm. The protein resides in the nucleoid. Its function is as follows. May be involved in recombination. The protein is Recombination-associated protein RdgC of Edwardsiella ictaluri (strain 93-146).